The primary structure comprises 525 residues: M-phase inducer phosphatase 1 (525 aa).

The short motif at methionine 73–phenylalanine 83 is the Phosphodegron element. Phosphoserine; by CHEK1 is present on serine 75. 3 positions are modified to phosphoserine; by NEK11: serine 78, serine 81, and serine 87. Serine 106 bears the Phosphoserine mark. Residue serine 123 is modified to Phosphoserine; by CHEK1 and CHEK2. The short motif at lysine 140–asparagine 142 is the KEN box element. The residue at position 177 (serine 177) is a Phosphoserine; by CHEK1. Disordered stretches follow at residues proline 179–proline 204 and serine 262–proline 308. Phosphoserine; by CHEK1 and CHEK2 occurs at positions 279 and 293. Over residues valine 294–glutamate 306 the composition is skewed to low complexity. Serine 322 bears the Phosphoserine mark. One can recognise a Rhodanese domain in the interval leucine 377–glutamate 483. The active site involves cysteine 432. Residue threonine 508 is modified to Phosphothreonine; by CHEK1. Phosphoserine; by PLK3 is present on residues serine 514 and serine 520.

This sequence belongs to the MPI phosphatase family. In terms of assembly, interacts with CCNB1/cyclin B1. Interacts with YWHAE/14-3-3 epsilon when phosphorylated. Interacts with CUL1 specifically when CUL1 is neddylated and active. Interacts with BTRC/BTRCP1 and FBXW11/BTRCP2. Interactions with CUL1, BTRC and FBXW11 are enhanced upon DNA damage. Interacts with HSP90AB1; prevents heat shock-mediated CDC25A degradation and contributes to cell cycle progression. Post-translationally, phosphorylated by CHEK1 on Ser-75, Ser-123, Ser-177, Ser-279, Ser-293 and Thr-508 during checkpoint mediated cell cycle arrest. Also phosphorylated by CHEK2 on Ser-123, Ser-279, and Ser-293 during checkpoint mediated cell cycle arrest. Phosphorylation on Ser-177 and Thr-508 creates binding sites for YWHAE/14-3-3 epsilon which inhibits CDC25A. Phosphorylation on Ser-75, Ser-123, Ser-177, Ser-279 and Ser-293 may also promote ubiquitin-dependent proteolysis of CDC25A by the SCF complex. Phosphorylation of CDC25A at Ser-75 by CHEK1 primes it for subsequent phosphorylation at Ser-78, Ser-81 and Ser-87 by NEK11. Phosphorylation by NEK11 is required for BTRC-mediated polyubiquitination and degradation. Phosphorylation by PIM1 leads to an increase in phosphatase activity. Phosphorylated by PLK3 following DNA damage, leading to promote its ubiquitination and degradation. In terms of processing, ubiquitinated by the anaphase promoting complex/cyclosome (APC/C) ubiquitin ligase complex that contains FZR1/CDH1 during G1 phase leading to its degradation by the proteasome. Ubiquitinated by a SCF complex containing BTRC and FBXW11 during S phase leading to its degradation by the proteasome. Deubiquitination by USP17L2/DUB3 leads to its stabilization.

It catalyses the reaction O-phospho-L-tyrosyl-[protein] + H2O = L-tyrosyl-[protein] + phosphate. Its activity is regulated as follows. Stimulated by B-type cyclins. Stimulated by PIM1-mediated phosphorylation. Functionally, tyrosine protein phosphatase which functions as a dosage-dependent inducer of mitotic progression. Directly dephosphorylates CDK1 and stimulates its kinase activity. Also dephosphorylates CDK2 in complex with cyclin-E, in vitro. The chain is M-phase inducer phosphatase 1 (CDC25A) from Bos taurus (Bovine).